The chain runs to 407 residues: Phosphopentomutase (407 aa).

6 residues coordinate Mn(2+): Asp10, Asp307, His312, Asp348, His349, and His360.

It belongs to the phosphopentomutase family. It depends on Mn(2+) as a cofactor.

The protein localises to the cytoplasm. It carries out the reaction 2-deoxy-alpha-D-ribose 1-phosphate = 2-deoxy-D-ribose 5-phosphate. The catalysed reaction is alpha-D-ribose 1-phosphate = D-ribose 5-phosphate. It functions in the pathway carbohydrate degradation; 2-deoxy-D-ribose 1-phosphate degradation; D-glyceraldehyde 3-phosphate and acetaldehyde from 2-deoxy-alpha-D-ribose 1-phosphate: step 1/2. Isomerase that catalyzes the conversion of deoxy-ribose 1-phosphate (dRib-1-P) and ribose 1-phosphate (Rib-1-P) to deoxy-ribose 5-phosphate (dRib-5-P) and ribose 5-phosphate (Rib-5-P), respectively. In Methylobacterium nodulans (strain LMG 21967 / CNCM I-2342 / ORS 2060), this protein is Phosphopentomutase.